Reading from the N-terminus, the 253-residue chain is Sulfate transporter CysZ (253 aa).

4 helical membrane-spanning segments follow: residues 27 to 47 (FVLLPLSINIVLFCGLIYLAV), 71 to 91 (ILWPLFVALVLLMVFFTFTVV), 150 to 170 (LFILSFIPVANIIAAPLWLLF), and 211 to 231 (IVYVALLIPVVNLLMMPAAVA).

The protein belongs to the CysZ family.

It localises to the cell inner membrane. Functionally, high affinity, high specificity proton-dependent sulfate transporter, which mediates sulfate uptake. Provides the sulfur source for the cysteine synthesis pathway. This Pseudomonas syringae pv. tomato (strain ATCC BAA-871 / DC3000) protein is Sulfate transporter CysZ.